We begin with the raw amino-acid sequence, 599 residues long: Elongation factor 4 (599 aa).

Positions 2–184 (KNIRNFSIIA…RLVRDIPPPE (183 aa)) constitute a tr-type G domain. GTP is bound by residues 14–19 (DHGKST) and 131–134 (NKID).

It belongs to the TRAFAC class translation factor GTPase superfamily. Classic translation factor GTPase family. LepA subfamily.

The protein localises to the cell inner membrane. It carries out the reaction GTP + H2O = GDP + phosphate + H(+). In terms of biological role, required for accurate and efficient protein synthesis under certain stress conditions. May act as a fidelity factor of the translation reaction, by catalyzing a one-codon backward translocation of tRNAs on improperly translocated ribosomes. Back-translocation proceeds from a post-translocation (POST) complex to a pre-translocation (PRE) complex, thus giving elongation factor G a second chance to translocate the tRNAs correctly. Binds to ribosomes in a GTP-dependent manner. In Escherichia fergusonii (strain ATCC 35469 / DSM 13698 / CCUG 18766 / IAM 14443 / JCM 21226 / LMG 7866 / NBRC 102419 / NCTC 12128 / CDC 0568-73), this protein is Elongation factor 4.